Consider the following 245-residue polypeptide: Cypemycin N-terminal methyltransferase (245 aa).

The protein belongs to the methyltransferase superfamily.

It catalyses the reaction N-terminal L-alanyl-[cypemycin] + 2 S-adenosyl-L-methionine = N-terminal N,N-dimethyl-L-alanyl-[cypemycin] + 2 S-adenosyl-L-homocysteine + 3 H(+). In terms of biological role, involved in the biosynthesis of the lanaridin cypemycin. The enzyme can methylate a variety of oligopeptides, cyclic peptides and the epsilon-amino group of lysine. This chain is Cypemycin N-terminal methyltransferase, found in Streptomyces sp.